Here is a 447-residue protein sequence, read N- to C-terminus: MEGIKYIASLVFFFVFLEASKTEPVKHSETYCMFQDKKYRVGEKWHPYLEPYGLVYCVNCICSENGNVLCSRVRCPTLHCLSPVHIPHLCCPRCPDSLPPMNSKVTSKSCEYNGTTYQHGELFIAEGLFQNRQPNQCSQCSCSEGNVYCGLKTCPKLTCAFPVSVPDSCCRVCRGDGELSWEHSDADIFRQPANREARHSYLRSPYDPPPSRQAGGLPRFAGSRSHRGAVIDSQQASGTIVQIVINNKHKHGQVCVSNGKTYSHGESWHPNLRAFGIVECVLCTCNVTKQECKKIHCPNRYPCKYPQKLDGKCCKVCPEEPPSQNFDSKGSFCGEETMPVYEAVLVEDGETARKVALETEKPPQVEVHVWTIRKGILQHFHIEKISKEMFGGLHHFKLVTRTTMNQWKIFAEGEAQLSQMCSSRVCRTELEDLVQVLYLERPEKDHC.

A signal peptide spans 1–22 (MEGIKYIASLVFFFVFLEASKT). 2 consecutive VWFC domains span residues 30–95 (TYCM…PRCP) and 108–174 (KSCE…RVCR). Asparagine 113 carries N-linked (GlcNAc...) asparagine glycosylation. The Cell attachment site motif lies at 174–176 (RGD). The disordered stretch occupies residues 199 to 219 (HSYLRSPYDPPPSRQAGGLPR). Positions 253–318 (QVCVSNGKTY…LDGKCCKVCP (66 aa)) constitute a VWFC 3 domain. An N-linked (GlcNAc...) asparagine glycan is attached at asparagine 286.

It is found in the secreted. Functionally, seems to antagonize the function of BMP4 by binding to it and preventing its interaction with receptors. Alters the fate commitment of neural stem cells from gliogenesis to neurogenesis. Contributes to neuronal differentiation of neural stem cells in the brain by preventing the adoption of a glial fate. May play a crucial role in dorsoventral axis formation. May play a role in embryonic bone formation. Plays a role during anterior segment eye development. The polypeptide is Chordin-like protein 1 (Chrdl1) (Rattus norvegicus (Rat)).